Reading from the N-terminus, the 235-residue chain is H2HPP isomerase (235 aa).

Cupin type-2 domains lie at valine 41–isoleucine 106 and lysine 151–asparagine 216. 8 residues coordinate a divalent metal cation: histidine 50, histidine 52, glutamine 56, histidine 91, histidine 162, histidine 164, glutamine 168, and histidine 202. Residue tyrosine 223 participates in substrate binding.

Monomer. Fe(2+) is required as a cofactor. Co(2+) serves as cofactor.

The protein resides in the cytoplasm. The catalysed reaction is 3-[(4R)-4-hydroxycyclohexa-1,5-dien-1-yl]-2-oxopropanoate = 3-[(1E,4R)-4-hydroxycyclohex-2-en-1-ylidene]pyruvate. It functions in the pathway antibiotic biosynthesis; bacilysin biosynthesis. Functionally, part of the bacABCDEF operon responsible for the biosynthesis of the nonribosomally synthesized dipeptide antibiotic bacilysin, composed of L-alanine and L-anticapsin. Bacilysin is an irreversible inactivator of the glutaminase domain of glucosamine synthetase. BacB catalyzes the allylic isomerization of the endocyclic-delta(4),delta(8)-7R-dihydro-hydroxyphenylpyruvate (en-H2HPP) to generate a mixture of 3E,7R- and 3Z, 7R-olefins (E/Z ration of 3/1) of the exocyclic-delta(3),delta(5)-dihydro-hydroxyphenylpyruvate (ex-H2HPP). The polypeptide is H2HPP isomerase (Bacillus subtilis (strain 168)).